Here is a 138-residue protein sequence, read N- to C-terminus: Cysteine desulfuration protein SufE (138 aa).

The active-site Cysteine persulfide intermediate is Cys-51.

Belongs to the SufE family. As to quaternary structure, homodimer. Interacts with SufS.

The protein localises to the cytoplasm. Its pathway is cofactor biosynthesis; iron-sulfur cluster biosynthesis. Participates in cysteine desulfuration mediated by SufS. Cysteine desulfuration mobilizes sulfur from L-cysteine to yield L-alanine and constitutes an essential step in sulfur metabolism for biosynthesis of a variety of sulfur-containing biomolecules. Functions as a sulfur acceptor for SufS, by mediating the direct transfer of the sulfur atom from the S-sulfanylcysteine of SufS, an intermediate product of cysteine desulfuration process. The sequence is that of Cysteine desulfuration protein SufE from Escherichia coli O8 (strain IAI1).